The chain runs to 210 residues: Leucyl/phenylalanyl-tRNA--protein transferase (210 aa).

This sequence belongs to the L/F-transferase family.

Its subcellular location is the cytoplasm. It carries out the reaction N-terminal L-lysyl-[protein] + L-leucyl-tRNA(Leu) = N-terminal L-leucyl-L-lysyl-[protein] + tRNA(Leu) + H(+). The enzyme catalyses N-terminal L-arginyl-[protein] + L-leucyl-tRNA(Leu) = N-terminal L-leucyl-L-arginyl-[protein] + tRNA(Leu) + H(+). It catalyses the reaction L-phenylalanyl-tRNA(Phe) + an N-terminal L-alpha-aminoacyl-[protein] = an N-terminal L-phenylalanyl-L-alpha-aminoacyl-[protein] + tRNA(Phe). Functionally, functions in the N-end rule pathway of protein degradation where it conjugates Leu, Phe and, less efficiently, Met from aminoacyl-tRNAs to the N-termini of proteins containing an N-terminal arginine or lysine. This Deinococcus radiodurans (strain ATCC 13939 / DSM 20539 / JCM 16871 / CCUG 27074 / LMG 4051 / NBRC 15346 / NCIMB 9279 / VKM B-1422 / R1) protein is Leucyl/phenylalanyl-tRNA--protein transferase.